The sequence spans 70 residues: Large ribosomal subunit protein bL31 (70 aa).

It belongs to the bacterial ribosomal protein bL31 family. Type A subfamily. As to quaternary structure, part of the 50S ribosomal subunit.

Binds the 23S rRNA. The chain is Large ribosomal subunit protein bL31 from Chlorobium chlorochromatii (strain CaD3).